A 609-amino-acid chain; its full sequence is Arginine--tRNA ligase (609 aa).

The 'HIGH' region signature appears at 132–142 (ANPTSSLHVGH).

It belongs to the class-I aminoacyl-tRNA synthetase family. In terms of assembly, monomer.

The protein localises to the cytoplasm. It carries out the reaction tRNA(Arg) + L-arginine + ATP = L-arginyl-tRNA(Arg) + AMP + diphosphate. The sequence is that of Arginine--tRNA ligase from Psychrobacter sp. (strain PRwf-1).